The primary structure comprises 390 residues: Type II methyltransferase M.SacI (390 aa).

Residues 5–371 (LPVISLFSGA…RALMEQLGYL (367 aa)) form the SAM-dependent MTase C5-type domain. Cys96 is an active-site residue.

The protein belongs to the class I-like SAM-binding methyltransferase superfamily. C5-methyltransferase family.

It carries out the reaction a 2'-deoxycytidine in DNA + S-adenosyl-L-methionine = a 5-methyl-2'-deoxycytidine in DNA + S-adenosyl-L-homocysteine + H(+). Functionally, a beta methylase recognizes the double-stranded sequence 5'-GAGCTC-3', methylates C-4 on both strands, and protects the DNA from cleavage by the SacI endonuclease. This chain is Type II methyltransferase M.SacI, found in Streptomyces achromogenes.